The sequence spans 387 residues: Probable peptidoglycan glycosyltransferase FtsW (387 aa).

Transmembrane regions (helical) follow at residues 20–40, 61–81, 86–106, 149–169, 172–192, 194–214, 284–304, 322–342, and 349–369; these read LYLL…VGSA, LFLL…LAFW, PVML…GIGV, TIRG…LLLL, DFGA…LGGA, LWHF…LAWY, LMGS…VLLI, GLGI…MGVL, and LPLM…VALI.

The protein belongs to the SEDS family. FtsW subfamily.

Its subcellular location is the cell inner membrane. It carries out the reaction [GlcNAc-(1-&gt;4)-Mur2Ac(oyl-L-Ala-gamma-D-Glu-L-Lys-D-Ala-D-Ala)](n)-di-trans,octa-cis-undecaprenyl diphosphate + beta-D-GlcNAc-(1-&gt;4)-Mur2Ac(oyl-L-Ala-gamma-D-Glu-L-Lys-D-Ala-D-Ala)-di-trans,octa-cis-undecaprenyl diphosphate = [GlcNAc-(1-&gt;4)-Mur2Ac(oyl-L-Ala-gamma-D-Glu-L-Lys-D-Ala-D-Ala)](n+1)-di-trans,octa-cis-undecaprenyl diphosphate + di-trans,octa-cis-undecaprenyl diphosphate + H(+). The protein operates within cell wall biogenesis; peptidoglycan biosynthesis. Peptidoglycan polymerase that is essential for cell division. The chain is Probable peptidoglycan glycosyltransferase FtsW from Nitrosococcus halophilus (strain Nc4).